The following is a 791-amino-acid chain: Solute carrier family 26 member 9 (791 aa).

Residues 1–70 (MSQPRPRYVV…WLPKYKIKDY (70 aa)) are Cytoplasmic-facing. The chain crosses the membrane as a helical span at residues 71-96 (IIPDLLGGLSGGSIQVPQGMAFALLA). Residues 97–99 (NLP) are Extracellular-facing. Residues 100 to 117 (AVNGLYSSFFPLLTYFFL) traverse the membrane as a helical segment. The Cytoplasmic segment spans residues 118-128 (GGVHQMVPGTF). A helical membrane pass occupies residues 129 to 142 (AVISILVGNICLQL). Over 143-171 (APESKFQVFNNATNESYVDTAAMEAERLH) the chain is Extracellular. A helical membrane pass occupies residues 172 to 190 (VSATLACLTAIIQMGLGFM). Residues 191–202 (QFGFVAIYLSES) lie on the Cytoplasmic side of the membrane. Residues 203–224 (FIRGFMTAAGLQILISVLKYIF) form a helical membrane-spanning segment. Residues 225 to 235 (GLTIPSYTGPG) lie on the Extracellular side of the membrane. Positions 236–244 (SIVFTFIDI) form an intramembrane region, helical. At 245-254 (CKNLPHTNIA) the chain is on the extracellular side. A helical transmembrane segment spans residues 255–273 (SLIFALISGAFLVLVKELN). Residues 274 to 281 (ARYMHKIR) are Cytoplasmic-facing. A helical transmembrane segment spans residues 282–297 (FPIPTEMIVVVVATAI). The Extracellular portion of the chain corresponds to 298-327 (SGGCKMPKKYHMQIVGEIQRGFPTPVSPVV). A helical transmembrane segment spans residues 328 to 348 (SQWKDMIGTAFSLAIVSYVIN). Residues 349 to 366 (LAMGRTLANKHGYDVDSN) lie on the Cytoplasmic side of the membrane. The chain crosses the membrane as a helical span at residues 367-382 (QEMIALGCSNFFGSFF). Residues 383-390 (KIHVICCA) are Extracellular-facing. A helical membrane pass occupies residues 391–400 (LSVTLAVDGA). Over 401 to 404 (GGKS) the chain is Cytoplasmic. The helical transmembrane segment at 405–423 (QVASLCVSLVVMITMLVLG) threads the bilayer. The Extracellular portion of the chain corresponds to 424–428 (IYLYP). Residues 429 to 450 (LPKSVLGALIAVNLKNSLKQLT) traverse the membrane as a helical segment. At 451–464 (DPYYLWRKSKLDCC) the chain is on the cytoplasmic side. The helical transmembrane segment at 465–476 (IWVVSFLSSFFL) threads the bilayer. Serine 477 is a topological domain (extracellular). A helical transmembrane segment spans residues 478–489 (LPYGVAVGVAFS). The Cytoplasmic portion of the chain corresponds to 490–791 (VLVVVFQTQF…MFHAETLTAL (302 aa)). In terms of domain architecture, STAS spans 519-737 (TYNRAQDIQG…PSIHDAVLFA (219 aa)). Positions 602 to 650 (FENAPPTDPNNNQTPANGTSVSYITFSPDSSSPAQSEPPASAEAPGEPS) are disordered. The segment covering 610–626 (PNNNQTPANGTSVSYIT) has biased composition (polar residues). The segment covering 628–650 (SPDSSSPAQSEPPASAEAPGEPS) has biased composition (low complexity).

This sequence belongs to the SLC26A/SulP transporter (TC 2.A.53) family. Homodimer. In terms of tissue distribution, predominantly expressed in lung at the luminal side of the bronchiolar and alveolar epithelium of lung. To a lower extent, also expressed in pancreas and prostate.

The protein localises to the cell membrane. It is found in the endomembrane system. The enzyme catalyses chloride(in) = chloride(out). It catalyses the reaction hydrogencarbonate(in) + chloride(out) = hydrogencarbonate(out) + chloride(in). Its activity is regulated as follows. Inhibited by ammonium and thiosulfate. In terms of biological role, ion transporter that can act both as an ion channel and anion exchanger. Mainly acts as a chloride channel, which mediate uncoupled chloride anion transport in an alternate-access mechanism where a saturable binding site is alternately exposed to either one or the other side of the membrane. Also acts as a DIDS- and thiosulfate- sensitive anion exchanger the exchange of chloride for bicarbonate ions across the cell membrane. This is Solute carrier family 26 member 9 from Homo sapiens (Human).